Reading from the N-terminus, the 186-residue chain is MTKGRRFNPPSDKDGRWFPHIGLTQKTPESITSATSKEPQSPHLPRQAEGKLPPIYKVREKQAVNNQFPFSVHDNRHSLENSGCYLDSGLGRKKISPDKRQHVSRNFNLWACDYVPSCLDGFSNNQISYVYKEAMVVSSFRRFPRCYKEIWNAFTFLPERSYTEVLKKKPKVRFTVDKKVVSSLES.

The interval 1–52 (MTKGRRFNPPSDKDGRWFPHIGLTQKTPESITSATSKEPQSPHLPRQAEGKL) is disordered. A compositionally biased stretch (polar residues) spans 24-39 (TQKTPESITSATSKEP).

The protein is Testis-expressed protein 36 (TEX36) of Homo sapiens (Human).